The chain runs to 580 residues: uncharacterized protein (580 aa).

One can recognise a PE-PPE domain in the interval 300–525; it reads PGYTATFLET…LRVLVELGYD (226 aa).

This sequence belongs to the mycobacterial PPE family.

This is an uncharacterized protein from Mycobacterium tuberculosis (strain CDC 1551 / Oshkosh).